We begin with the raw amino-acid sequence, 258 residues long: Electron transfer flavoprotein beta subunit lysine methyltransferase (258 aa).

This sequence belongs to the methyltransferase superfamily. ETFBKMT family.

The protein resides in the cytoplasm. It is found in the mitochondrion matrix. The catalysed reaction is L-lysyl-[protein] + 3 S-adenosyl-L-methionine = N(6),N(6),N(6)-trimethyl-L-lysyl-[protein] + 3 S-adenosyl-L-homocysteine + 3 H(+). Its function is as follows. Protein-lysine methyltransferase that selectively trimethylates the flavoprotein ETFB in mitochondria. Thereby, may negatively regulate the function of ETFB in electron transfer from Acyl-CoA dehydrogenases to the main respiratory chain. This is Electron transfer flavoprotein beta subunit lysine methyltransferase from Danio rerio (Zebrafish).